The chain runs to 409 residues: Short chain dehydrogenase sirS (409 aa).

The NADP(+) site is built by valine 49, leucine 68, lysine 195, valine 288, threonine 290, and alanine 299. Residues 306–332 are disordered; the sequence is GVGPEGAGEEEGKGEAEGGAKGATGWS.

This sequence belongs to the short-chain dehydrogenases/reductases (SDR) family. Highly divergent.

Its pathway is mycotoxin biosynthesis. Its function is as follows. Short chain dehydrogenase; part of the gene cluster that mediates the biosynthesis of sirodesmin PL, an epipolythiodioxopiperazine (ETP) characterized by a disulfide bridged cyclic dipeptide and that acts as a phytotoxin which is involved in the blackleg didease of canola. SirD catalyzes the O-prenylation of L-tyrosine (L-Tyr) in the presence of dimethylallyl diphosphate (DMAPP) to yield 4-O-dimethylallyl-L-Tyr, and therefore represents probably the first pathway-specific enzyme in the biosynthesis of sirodesmin PL. 4-O-dimethylallyl-L-Tyr, then undergoes condensation with L-Ser in a reaction catalyzed by the non-ribosomal peptide synthase sirP to form the diketopiperazine (DKP) backbone. Further bishydroxylation of the DKP performed by the cytochrome P450 monooxygenase sirC leads to the production of the intermediate phomamide. This step is essential to form the reactive thiol group required for toxicity of sirodesmin PL. The next steps of sirodesmin biosynthesis are not well understood yet, but some predictions could be made from intermediate compounds identification. Phomamide is converted into phomalizarine via oxidation, probably by sirT. Further oxidation, methylation (by sirM or sirN) and reduction steps convert phomalizarine to deacetyl sirodesmin. Finally, acetyltransferase sirH probably acetylates deacetyl sirodesmin to produce sirodesmin PL. This is Short chain dehydrogenase sirS from Leptosphaeria maculans (Blackleg fungus).